Here is a 159-residue protein sequence, read N- to C-terminus: 3-hydroxyacyl-[acyl-carrier-protein] dehydratase FabZ (159 aa).

H59 is an active-site residue.

This sequence belongs to the thioester dehydratase family. FabZ subfamily.

It is found in the cytoplasm. The catalysed reaction is a (3R)-hydroxyacyl-[ACP] = a (2E)-enoyl-[ACP] + H2O. Involved in unsaturated fatty acids biosynthesis. Catalyzes the dehydration of short chain beta-hydroxyacyl-ACPs and long chain saturated and unsaturated beta-hydroxyacyl-ACPs. The sequence is that of 3-hydroxyacyl-[acyl-carrier-protein] dehydratase FabZ from Caulobacter vibrioides (strain ATCC 19089 / CIP 103742 / CB 15) (Caulobacter crescentus).